The sequence spans 569 residues: Spermatogenesis-associated protein 16 (569 aa).

Belongs to the SPATA16 family.

It is found in the golgi apparatus. It localises to the cytoplasmic vesicle. Its subcellular location is the secretory vesicle. The protein resides in the acrosome. Its function is as follows. Essential for spermiogenesis and male fertility. Involved in the formation of sperm acrosome during spermatogenesis. In Macaca fascicularis (Crab-eating macaque), this protein is Spermatogenesis-associated protein 16 (SPATA16).